We begin with the raw amino-acid sequence, 342 residues long: Heat-inducible transcription repressor HrcA (342 aa).

It belongs to the HrcA family.

Functionally, negative regulator of class I heat shock genes (grpE-dnaK-dnaJ and groELS operons). Prevents heat-shock induction of these operons. This Onion yellows phytoplasma (strain OY-M) protein is Heat-inducible transcription repressor HrcA.